Here is a 418-residue protein sequence, read N- to C-terminus: Tyrosine--tRNA ligase (418 aa).

L-tyrosine is bound at residue Tyr-38. The short motif at 43–52 is the 'HIGH' region element; the sequence is CTAKSLHVGS. 2 residues coordinate L-tyrosine: Tyr-175 and Gln-179. Positions 235-239 match the 'KMSKS' region motif; the sequence is KMGKT. Residue Lys-238 participates in ATP binding. An S4 RNA-binding domain is found at 348–413; the sequence is LPIIKLLQIS…CGKKRHLKIM (66 aa).

The protein belongs to the class-I aminoacyl-tRNA synthetase family. TyrS type 1 subfamily. Homodimer.

The protein localises to the cytoplasm. It carries out the reaction tRNA(Tyr) + L-tyrosine + ATP = L-tyrosyl-tRNA(Tyr) + AMP + diphosphate + H(+). In terms of biological role, catalyzes the attachment of tyrosine to tRNA(Tyr) in a two-step reaction: tyrosine is first activated by ATP to form Tyr-AMP and then transferred to the acceptor end of tRNA(Tyr). In Ehrlichia canis (strain Jake), this protein is Tyrosine--tRNA ligase.